We begin with the raw amino-acid sequence, 353 residues long: Methylthioribose-1-phosphate isomerase (353 aa).

Substrate-binding positions include 51–53, Arg-94, and Gln-203; that span reads RGA. Asp-244 acts as the Proton donor in catalysis. 254 to 255 contacts substrate; the sequence is NK.

The protein belongs to the eIF-2B alpha/beta/delta subunits family. MtnA subfamily.

The catalysed reaction is 5-(methylsulfanyl)-alpha-D-ribose 1-phosphate = 5-(methylsulfanyl)-D-ribulose 1-phosphate. Its pathway is amino-acid biosynthesis; L-methionine biosynthesis via salvage pathway; L-methionine from S-methyl-5-thio-alpha-D-ribose 1-phosphate: step 1/6. Its function is as follows. Catalyzes the interconversion of methylthioribose-1-phosphate (MTR-1-P) into methylthioribulose-1-phosphate (MTRu-1-P). This chain is Methylthioribose-1-phosphate isomerase, found in Trichodesmium erythraeum (strain IMS101).